The sequence spans 457 residues: ATP synthase subunit beta (457 aa).

Residue 150-157 (GGAGVGKT) participates in ATP binding.

It belongs to the ATPase alpha/beta chains family. As to quaternary structure, F-type ATPases have 2 components, CF(1) - the catalytic core - and CF(0) - the membrane proton channel. CF(1) has five subunits: alpha(3), beta(3), gamma(1), delta(1), epsilon(1). CF(0) has three main subunits: a(1), b(2) and c(9-12). The alpha and beta chains form an alternating ring which encloses part of the gamma chain. CF(1) is attached to CF(0) by a central stalk formed by the gamma and epsilon chains, while a peripheral stalk is formed by the delta and b chains.

It is found in the cell membrane. It carries out the reaction ATP + H2O + 4 H(+)(in) = ADP + phosphate + 5 H(+)(out). Functionally, produces ATP from ADP in the presence of a proton gradient across the membrane. The catalytic sites are hosted primarily by the beta subunits. The polypeptide is ATP synthase subunit beta (Baumannia cicadellinicola subsp. Homalodisca coagulata).